We begin with the raw amino-acid sequence, 2472 residues long: Centrosomal protein of 290 kDa (2472 aa).

Positions 1-689 are self-association (with itself or C-terminus); the sequence is MPPNIKWKEL…MESKNAEGIF (689 aa). 3 coiled-coil regions span residues 59–747, 1129–1392, and 1459–1492; these read MKMK…LRQS, RQRI…QQSK, and QVILKTQATCKSLEEKLKEKESALRLAEQNILSR. A disordered region spans residues 128–164; sequence DRELEDMEKELDKEKKVNEQLALRNEEAENENSKLRR. A compositionally biased stretch (basic and acidic residues) spans 137–164; it reads ELDKEKKVNEQLALRNEEAENENSKLRR. Residues 690 to 890 are interaction with IQCB1; it reads DASLHLKAQV…TVLQVNEKSL (201 aa). Disordered regions lie at residues 1691-1713 and 2451-2472; these read AHKDSQSLKSELQAQKEANSRAP and PSPLAASEHSEDGESPHSFPIY. Over residues 1697-1713 the composition is skewed to polar residues; it reads SLKSELQAQKEANSRAP. A self-association (with itself or N-terminus) region spans residues 1960 to 2472; sequence TTGMTVDQVL…GESPHSFPIY (513 aa).

As to quaternary structure, part of the tectonic-like complex (also named B9 complex). Interacts with ATF4 via its N-terminal region. Associates with the BBSome complex, interacting (via N-terminus) with BBS4. Interacts with IQCB1/NPHP5; IQCB1 and CEP290/NPHP6 are proposed to form a functional NPHP5-6 module localized to the centrosome. Interacts with NPHP4; the interaction likely requires additional interactors. Interacts with ZNF423, FAM161A, CEP162, CEP162, CEP131, TALPID3, CCDC13, CC2D2A, RPGRIP1. Can self-associate (homo- or heteromeric). Interacts with CCP110; required for suppressing cilia formation. Interacts with RPGR. Associates (via C-terminus) with microtubules; association to microtubule is reduced in response to cellular stress, such as ultraviolet light (UV) radiation or heat shock, in a process that requires p38 MAP kinase signaling. Interacts with FAM161A. Interacts with PCM1. Interacts with CCDC66. Interacts with ARMC9 and CSPP1. In terms of processing, ubiquitinated. May undergo monoubiquitination; monoubiquitination is inhibited in response to cellular stress, such as ultraviolet light (UV) radiation or heat shock, but does not cause its displacement from centriolar satellites. As to expression, expressed in multiple organs during early postnatal development, with highest levels in hindbrain.

The protein localises to the cytoplasm. Its subcellular location is the cytoskeleton. It is found in the microtubule organizing center. It localises to the centrosome. The protein resides in the centriolar satellite. The protein localises to the nucleus. Its subcellular location is the centriole. It is found in the cell projection. It localises to the cilium. The protein resides in the cilium basal body. The protein localises to the cytoplasmic vesicle. Its function is as follows. Involved in early and late steps in cilia formation. Its association with CCP110 is required for inhibition of primary cilia formation by CCP110. May play a role in early ciliogenesis in the disappearance of centriolar satellites and in the transition of primary ciliar vesicles (PCVs) to capped ciliary vesicles (CCVs). Required for the centrosomal recruitment of RAB8A and for the targeting of centriole satellite proteins to centrosomes such as of PCM1. Required for the correct localization of ciliary and phototransduction proteins in retinal photoreceptor cells; may play a role in ciliary transport processes. Required for efficient recruitment of RAB8A to primary cilium. In the ciliary transition zone is part of the tectonic-like complex (also named B9 complex) which is required for tissue-specific ciliogenesis and may regulate ciliary membrane composition. Involved in regulation of the BBSome complex integrity, specifically for presence of BBS2, BBS5 and BBS8/TTC8 in the complex, and in ciliary targeting of selected BBSome cargos. May play a role in controlling entry of the BBSome complex to cilia possibly implicating IQCB1/NPHP5. Activates ATF4-mediated transcription. The chain is Centrosomal protein of 290 kDa from Mus musculus (Mouse).